The sequence spans 267 residues: Undecaprenyl-diphosphatase (267 aa).

The next 7 helical transmembrane spans lie at 1-21 (MSLFHLILVALIQGITEFLPV), 40-60 (GQVIDVAVHVGTLGAVVLYFW), 85-105 (LAMGLIVATIPTVLAGAALHF), 111-131 (ALRSITVIGWTMLLFGLLLWW), 190-210 (MLMSIPTIIASGVLLGADVAV), 219-239 (DGAIAAAFAFVSALLALSLMM), and 245-265 (VSFTPYVIYRLALGLVLLGIA).

Belongs to the UppP family.

It is found in the cell inner membrane. It catalyses the reaction di-trans,octa-cis-undecaprenyl diphosphate + H2O = di-trans,octa-cis-undecaprenyl phosphate + phosphate + H(+). Its function is as follows. Catalyzes the dephosphorylation of undecaprenyl diphosphate (UPP). Confers resistance to bacitracin. This chain is Undecaprenyl-diphosphatase, found in Ruegeria pomeroyi (strain ATCC 700808 / DSM 15171 / DSS-3) (Silicibacter pomeroyi).